We begin with the raw amino-acid sequence, 615 residues long: Sterol 3-beta-glucosyltransferase UGT80B1 (615 aa).

Residues 1 to 54 form a disordered region; the sequence is MASNVFDHPLQELEGEDNGVKSEKASLLETSGSVDTTPEDSGHRSSDGHRGLDH. A compositionally biased stretch (basic and acidic residues) spans 40–54; the sequence is DSGHRSSDGHRGLDH.

This sequence belongs to the glycosyltransferase 28 family. Expressed in developing seeds, seedlings, leaves and around the apical tip of cotyledons. In embryo, expressed in the seed coat and cotyledons.

It carries out the reaction a sterol + UDP-alpha-D-glucose = a sterol 3-beta-D-glucoside + UDP + H(+). Involved in the biosynthesis of sterol glucosides. Catalyzes the synthesis of steryl glycosides (SGs) and acyl steryl glycosides (ASGs) which are the most abundant sterol derivatives in higher plants. Can act on several sterols like sitosterol, campesterol and stigmasterol. Is required for embryonic development, seed suberin accumulation, cutin formation and flavanoid accumulation in the seed coat. Both UGT80A2 and UGT80B1 are required for the normal production of SGs and ASGs in seeds. This Arabidopsis thaliana (Mouse-ear cress) protein is Sterol 3-beta-glucosyltransferase UGT80B1.